We begin with the raw amino-acid sequence, 490 residues long: Xylulose kinase (490 aa).

Substrate is bound by residues H99, R170, D280, and N281. ATP is bound by residues W355, 441 to 442, and N445; that span reads GA.

Belongs to the FGGY kinase family. In terms of assembly, monomer.

The catalysed reaction is D-xylulose + ATP = D-xylulose 5-phosphate + ADP + H(+). Phosphorylates D-xylulose to produce D-xylulose 5-phosphate, a molecule that may play an important role in the regulation of glucose metabolism and lipogenesis. This Bos taurus (Bovine) protein is Xylulose kinase (XYLB).